Consider the following 66-residue polypeptide: Potassium channel toxin alpha-KTx (66 aa).

The N-terminal stretch at 1–21 (MNTKVVLIMLMITSVILVVEA) is a signal peptide. Cystine bridges form between Cys-29-Cys-49, Cys-35-Cys-59, Cys-39-Cys-61, and Cys-44-Cys-64.

This sequence belongs to the short scorpion toxin superfamily. Potassium channel inhibitor family. As to expression, expressed by the venom gland.

It localises to the secreted. Its function is as follows. Blocks voltage-gated potassium channels. The sequence is that of Potassium channel toxin alpha-KTx from Hoffmannihadrurus gertschi (Scorpion).